The sequence spans 283 residues: MSFTSRLKKELFIKAQNLVPQHQLSRVVGKVAASENPILKAAVIHAFKTKYGIDLSIAEQGNALKYKSFNDFFTRALKDGVRLVDENPDSIVSPADGAISQIGKITAGEVFQAKGQSFSVEKLIGDPQLAQPFQEGEFATVYLSPRDYHRVHMPFSGTLTETLYVPGELFSVNQVTAENVPGLFARNERMVCLFDTELGRMAVVLVGAMIVAGIETVATGKVKPSGRIELQHHELKLEKGAELGRFYLGSTAIILFEKDKIEWEKRFKAESVVVMGERMGHTI.

Residues aspartate 96, histidine 152, and serine 250 each act as charge relay system; for autoendoproteolytic cleavage activity in the active site. Serine 250 (schiff-base intermediate with substrate; via pyruvic acid; for decarboxylase activity) is an active-site residue. Residue serine 250 is modified to Pyruvic acid (Ser); by autocatalysis.

This sequence belongs to the phosphatidylserine decarboxylase family. PSD-B subfamily. Prokaryotic type I sub-subfamily. Heterodimer of a large membrane-associated beta subunit and a small pyruvoyl-containing alpha subunit. Requires pyruvate as cofactor. In terms of processing, is synthesized initially as an inactive proenzyme. Formation of the active enzyme involves a self-maturation process in which the active site pyruvoyl group is generated from an internal serine residue via an autocatalytic post-translational modification. Two non-identical subunits are generated from the proenzyme in this reaction, and the pyruvate is formed at the N-terminus of the alpha chain, which is derived from the carboxyl end of the proenzyme. The autoendoproteolytic cleavage occurs by a canonical serine protease mechanism, in which the side chain hydroxyl group of the serine supplies its oxygen atom to form the C-terminus of the beta chain, while the remainder of the serine residue undergoes an oxidative deamination to produce ammonia and the pyruvoyl prosthetic group on the alpha chain. During this reaction, the Ser that is part of the protease active site of the proenzyme becomes the pyruvoyl prosthetic group, which constitutes an essential element of the active site of the mature decarboxylase.

The protein resides in the cell membrane. The catalysed reaction is a 1,2-diacyl-sn-glycero-3-phospho-L-serine + H(+) = a 1,2-diacyl-sn-glycero-3-phosphoethanolamine + CO2. Its pathway is phospholipid metabolism; phosphatidylethanolamine biosynthesis; phosphatidylethanolamine from CDP-diacylglycerol: step 2/2. Functionally, catalyzes the formation of phosphatidylethanolamine (PtdEtn) from phosphatidylserine (PtdSer). This is Phosphatidylserine decarboxylase proenzyme from Acinetobacter baumannii (strain ACICU).